Here is a 219-residue protein sequence, read N- to C-terminus: uncharacterized protein (219 aa).

This is an uncharacterized protein from Methanocaldococcus jannaschii (strain ATCC 43067 / DSM 2661 / JAL-1 / JCM 10045 / NBRC 100440) (Methanococcus jannaschii).